The sequence spans 258 residues: GTP cyclohydrolase FolE2 (258 aa).

The protein belongs to the GTP cyclohydrolase IV family.

The catalysed reaction is GTP + H2O = 7,8-dihydroneopterin 3'-triphosphate + formate + H(+). It functions in the pathway cofactor biosynthesis; 7,8-dihydroneopterin triphosphate biosynthesis; 7,8-dihydroneopterin triphosphate from GTP: step 1/1. Functionally, converts GTP to 7,8-dihydroneopterin triphosphate. This Pseudothermotoga lettingae (strain ATCC BAA-301 / DSM 14385 / NBRC 107922 / TMO) (Thermotoga lettingae) protein is GTP cyclohydrolase FolE2.